A 246-amino-acid chain; its full sequence is Large ribosomal subunit protein uL2 (246 aa).

Positions 197–226 (SPYAHPHGGGSHPKGGTPVPKTAPPGQKVG) are disordered.

This sequence belongs to the universal ribosomal protein uL2 family. As to quaternary structure, part of the 50S ribosomal subunit. Forms a bridge to the 30S subunit in the 70S ribosome.

In terms of biological role, one of the primary rRNA binding proteins. Required for association of the 30S and 50S subunits to form the 70S ribosome, for tRNA binding and peptide bond formation. It has been suggested to have peptidyltransferase activity; this is somewhat controversial. Makes several contacts with the 16S rRNA in the 70S ribosome. The protein is Large ribosomal subunit protein uL2 of Pyrobaculum islandicum (strain DSM 4184 / JCM 9189 / GEO3).